A 309-amino-acid chain; its full sequence is MTGPALPRILIICGPTASGKSELAVRLARELDGEIVNADSMQIHRGMDIGTAKPTVGEMGAVPHHLLDVADPDRPFSAADFSDAASQAISGIIRRGKRPIVVGGTGLYLRALLHGLVDSPSGAGELRRRLQEEARELGNQAMLERLRRVDPQLATTIHPNNLVRIIRGLEVYHLTGIPLSRYQHEHGFAAERYRSLAIGIRVERRELYERIERRVDRMLATGLLDEVRALLEAGFGPELKAMRSIGYRESCDFLAGNSSLEETTALIKRNTRRYAKRQLTWFNADPEIIWLEYPEKFATILRHCIAFFE.

14–21 serves as a coordination point for ATP; it reads GPTASGKS. 16-21 lines the substrate pocket; it reads TASGKS. Residues 39–42 form an interaction with substrate tRNA region; it reads DSMQ.

The protein belongs to the IPP transferase family. As to quaternary structure, monomer. The cofactor is Mg(2+).

It catalyses the reaction adenosine(37) in tRNA + dimethylallyl diphosphate = N(6)-dimethylallyladenosine(37) in tRNA + diphosphate. Functionally, catalyzes the transfer of a dimethylallyl group onto the adenine at position 37 in tRNAs that read codons beginning with uridine, leading to the formation of N6-(dimethylallyl)adenosine (i(6)A). The sequence is that of tRNA dimethylallyltransferase 1 from Pelobacter propionicus (strain DSM 2379 / NBRC 103807 / OttBd1).